The chain runs to 467 residues: Glutamate--tRNA ligase (467 aa).

A 'HIGH' region motif is present at residues 9 to 19 (PSPTGYLHIGG). A 'KMSKS' region motif is present at residues 237–241 (KLSKR). Position 240 (K240) interacts with ATP.

This sequence belongs to the class-I aminoacyl-tRNA synthetase family. Glutamate--tRNA ligase type 1 subfamily. As to quaternary structure, monomer.

The protein resides in the cytoplasm. It catalyses the reaction tRNA(Glu) + L-glutamate + ATP = L-glutamyl-tRNA(Glu) + AMP + diphosphate. Functionally, catalyzes the attachment of glutamate to tRNA(Glu) in a two-step reaction: glutamate is first activated by ATP to form Glu-AMP and then transferred to the acceptor end of tRNA(Glu). In Xylella fastidiosa (strain M12), this protein is Glutamate--tRNA ligase.